A 261-amino-acid polypeptide reads, in one-letter code: tRNA pseudouridine synthase A (261 aa).

D51 acts as the Nucleophile in catalysis. Position 109 (Y109) interacts with substrate.

The protein belongs to the tRNA pseudouridine synthase TruA family. As to quaternary structure, homodimer.

It catalyses the reaction uridine(38/39/40) in tRNA = pseudouridine(38/39/40) in tRNA. In terms of biological role, formation of pseudouridine at positions 38, 39 and 40 in the anticodon stem and loop of transfer RNAs. The polypeptide is tRNA pseudouridine synthase A (Shewanella woodyi (strain ATCC 51908 / MS32)).